The chain runs to 364 residues: sn-glycerol-3-phosphate import ATP-binding protein UgpC (364 aa).

Residues 4 to 235 (VVLRNVRKTY…PATTFVASFI (232 aa)) form the ABC transporter domain. 37 to 44 (GPSGCGKS) is a binding site for ATP.

Belongs to the ABC transporter superfamily. sn-glycerol-3-phosphate importer (TC 3.A.1.1.3) family. The complex is composed of two ATP-binding proteins (UgpC), two transmembrane proteins (UgpA and UgpE) and a solute-binding protein (UgpB).

It is found in the cell inner membrane. It catalyses the reaction sn-glycerol 3-phosphate(out) + ATP + H2O = sn-glycerol 3-phosphate(in) + ADP + phosphate + H(+). Functionally, part of the ABC transporter complex UgpBAEC involved in sn-glycerol-3-phosphate (G3P) import. Responsible for energy coupling to the transport system. The protein is sn-glycerol-3-phosphate import ATP-binding protein UgpC of Rhodopseudomonas palustris (strain BisB5).